Consider the following 165-residue polypeptide: Large ribosomal subunit protein uL15 (165 aa).

The tract at residues 1-44 (MSLNQLKAPRGANRAKKRVGRGQGSGLGKTAGRGGKGQKARSGN) is disordered. The span at 21–37 (RGQGSGLGKTAGRGGKG) shows a compositional bias: gly residues.

It belongs to the universal ribosomal protein uL15 family. In terms of assembly, part of the 50S ribosomal subunit.

Its function is as follows. Binds to the 23S rRNA. This Anaeromyxobacter dehalogenans (strain 2CP-1 / ATCC BAA-258) protein is Large ribosomal subunit protein uL15.